The sequence spans 218 residues: Small ribosomal subunit protein uS3c (218 aa).

A KH type-2 domain is found at 47 to 118 (VQKNIRISSG…KLNIAITRIS (72 aa)).

Belongs to the universal ribosomal protein uS3 family. Part of the 30S ribosomal subunit.

Its subcellular location is the plastid. It localises to the chloroplast. The sequence is that of Small ribosomal subunit protein uS3c (rps3) from Arabis hirsuta (Hairy rock-cress).